The primary structure comprises 233 residues: Large ribosomal subunit protein uL1 (233 aa).

It belongs to the universal ribosomal protein uL1 family. Part of the 50S ribosomal subunit.

Functionally, binds directly to 23S rRNA. The L1 stalk is quite mobile in the ribosome, and is involved in E site tRNA release. Protein L1 is also a translational repressor protein, it controls the translation of the L11 operon by binding to its mRNA. This is Large ribosomal subunit protein uL1 from Geobacillus stearothermophilus (Bacillus stearothermophilus).